A 134-amino-acid chain; its full sequence is Homeobox protein ceh-5 (134 aa).

Positions 35–94 (PKRPRTVFTDEQLEKLEESFNTSGYLSGSTRAKLAESLGLSDNQVKVWFQNRRTKQKKID) form a DNA-binding region, homeobox.

Its subcellular location is the nucleus. The sequence is that of Homeobox protein ceh-5 (ceh-5) from Caenorhabditis elegans.